The following is a 258-amino-acid chain: Regulatory protein RecX (258 aa).

The protein belongs to the RecX family.

It is found in the cytoplasm. In terms of biological role, modulates RecA activity. In Streptococcus pneumoniae (strain JJA), this protein is Regulatory protein RecX.